Here is a 478-residue protein sequence, read N- to C-terminus: Membrane-bound lytic murein transglycosylase F (478 aa).

A signal peptide spans 1 to 22 (MTRFLFAIILGFLLTACQQVTV). Residues 23-257 (EETEYVPHKL…HLNEKYFGHV (235 aa)) form a non-LT domain region. The LT domain stretch occupies residues 258 to 478 (KRFDYIDTRA…PGTLSPDKPK (221 aa)). Glutamate 302 is a catalytic residue. The tract at residues 446–478 (SKQQNSDEEEPSDLASEDGPAPVPGTLSPDKPK) is disordered. Acidic residues predominate over residues 451–461 (SDEEEPSDLAS).

In the N-terminal section; belongs to the bacterial solute-binding protein 3 family. It in the C-terminal section; belongs to the transglycosylase Slt family.

The protein localises to the cell outer membrane. The enzyme catalyses Exolytic cleavage of the (1-&gt;4)-beta-glycosidic linkage between N-acetylmuramic acid (MurNAc) and N-acetylglucosamine (GlcNAc) residues in peptidoglycan, from either the reducing or the non-reducing ends of the peptidoglycan chains, with concomitant formation of a 1,6-anhydrobond in the MurNAc residue.. In terms of biological role, murein-degrading enzyme that degrades murein glycan strands and insoluble, high-molecular weight murein sacculi, with the concomitant formation of a 1,6-anhydromuramoyl product. Lytic transglycosylases (LTs) play an integral role in the metabolism of the peptidoglycan (PG) sacculus. Their lytic action creates space within the PG sacculus to allow for its expansion as well as for the insertion of various structures such as secretion systems and flagella. This chain is Membrane-bound lytic murein transglycosylase F, found in Shewanella sp. (strain ANA-3).